Here is a 456-residue protein sequence, read N- to C-terminus: Nuclear distribution protein PAC1 (456 aa).

Residues 9–41 (QADELHKSIIAYLSANDLPNTAAALRAELNLTE) form the LisH domain. Positions 61–88 (TSIVRLQKKIMDLEARNAALQSELDNLT) form a coiled coil. WD repeat units lie at residues 114–153 (SHRDTINCIAFHPKFSSLASGSDDFTIKIWDWELGELEMT), 156–197 (GHTR…KNVR), 201–240 (GHDHSVSAVRFIPCRNLLASASRDKDVRIWDVTTGYCVRS), 243–282 (GHTGWVRDVCPSFDGNFLFSSGDDMTARLWDISAIPNPEN), 288–348 (GHEH…LMTL), 350–389 (GHDNWVRGIVFHPAGKYLLSVSDDRTLRCWDLSQEGKCVK), 394–437 (AHDR…PDVQ), and 439–456 (RCVIATGSVDRKLQIFAA).

The protein belongs to the WD repeat LIS1/nudF family. Self-associates. Interacts with NDL1 and dynein.

The protein localises to the cytoplasm. It localises to the cytoskeleton. The protein resides in the spindle pole. Its function is as follows. Positively regulates the activity of the minus-end directed microtubule motor protein dynein. May enhance dynein-mediated microtubule sliding by targeting dynein to the microtubule plus end. Required for nuclear migration during vegetative growth as well as development. Required for retrograde early endosome (EE) transport from the hyphal tip. Required for localization of dynein to the mitotic spindle poles. Recruits additional proteins to the dynein complex at SPBs. This Ajellomyces capsulatus (strain H143) (Darling's disease fungus) protein is Nuclear distribution protein PAC1.